The chain runs to 1203 residues: DNA-directed RNA polymerase subunit beta (1203 aa).

The segment covering 1174–1195 (AAQEAKAAFEAEEAEKATKAEA) has biased composition (basic and acidic residues). The segment at 1174–1203 (AAQEAKAAFEAEEAEKATKAEATEEAAEQE) is disordered.

It belongs to the RNA polymerase beta chain family. In terms of assembly, the RNAP catalytic core consists of 2 alpha, 1 beta, 1 beta' and 1 omega subunit. When a sigma factor is associated with the core the holoenzyme is formed, which can initiate transcription.

The enzyme catalyses RNA(n) + a ribonucleoside 5'-triphosphate = RNA(n+1) + diphosphate. DNA-dependent RNA polymerase catalyzes the transcription of DNA into RNA using the four ribonucleoside triphosphates as substrates. This chain is DNA-directed RNA polymerase subunit beta, found in Streptococcus pneumoniae (strain ATCC 700669 / Spain 23F-1).